The sequence spans 138 residues: MLQPARTKYRKMQKGRMRGKAYRGSDLAQGEYGLQATECGRLTSRQIEAARVAITRYVKRGGKLWIRVFPDKPITKKPAETRMGTGKGNVEFYVAVVKPGRVLYELAGVDDASAKKAFHLAAHKLPVATKLVKRGETL.

This sequence belongs to the universal ribosomal protein uL16 family. In terms of assembly, part of the 50S ribosomal subunit.

Its function is as follows. Binds 23S rRNA and is also seen to make contacts with the A and possibly P site tRNAs. The sequence is that of Large ribosomal subunit protein uL16 from Anaeromyxobacter dehalogenans (strain 2CP-C).